A 244-amino-acid polypeptide reads, in one-letter code: Extracellular superoxide dismutase [Cu-Zn] (244 aa).

Positions 1–15 (MVAFLFCNLLLVACG) are cleaved as a signal peptide. Disulfide bonds link cysteine 70/cysteine 215 and cysteine 132/cysteine 214. A glycan (N-linked (GlcNAc...) asparagine) is linked at asparagine 114. Histidine 121, histidine 123, and histidine 138 together coordinate Cu cation. Residues histidine 138, histidine 146, histidine 149, and aspartate 152 each coordinate Zn(2+). Histidine 188 contributes to the Cu cation binding site. Residues 224 to 244 (AWESQTKERKKRRRESECKTT) are disordered.

Belongs to the Cu-Zn superoxide dismutase family. As to quaternary structure, homodimer. Interacts with ATP7A; this interaction is copper-dependent and is required for SOD3 activity. Requires Cu cation as cofactor. Zn(2+) serves as cofactor.

It is found in the secreted. It localises to the extracellular space. Its subcellular location is the golgi apparatus. The protein resides in the trans-Golgi network. The enzyme catalyses 2 superoxide + 2 H(+) = H2O2 + O2. Its function is as follows. Protect the extracellular space from toxic effect of reactive oxygen intermediates by converting superoxide radicals into hydrogen peroxide and oxygen. In Rattus norvegicus (Rat), this protein is Extracellular superoxide dismutase [Cu-Zn] (Sod3).